Reading from the N-terminus, the 1864-residue chain is MEGCVGEESFQMWELNRRLEAYLTRVKTLEEQNQLLSAELGGLRAQSGDASWRARADDELAALRVLVDQRWREKHEAEVQRDNLAEELESVAGRCQQVRLARERTIEEAACSRRALEAEKNARGWLSTQAAELERELEALRASHEEERAHLNAQAACTPRRPPAPAHASPIRAPEVEELARRLGEVWRGAVRDYQERVAHMESSLGQARERLGQAVRGARESRLEVQQLQADRDSLQERREALEQRLEGRWQDRLQATEKFQLAVEALEQEKQGLQSQIAQILEGGQQLAHLKMSLSLEVATYRTLLEAENSRLQTPGRSSQASLGFPDPKLKLHFLGIPEDQHLGSVLPVLSPTSFSSPLPNTLETPVTAFLKTQEFLKARTPTLASTPIPPMSEAPYPKNAEVRAQDVPHSLLQGGRQQAPEPLWAEATVPSSTGVLPELEEPGGEQPDHFPDDPTSLAPPLNPHHSILEAKDRESSESRVSSIFQEEEGQIWELVKKEAATEVKVENSLAQEIQESGLDTEEIQDSQGPLQMETLEALGDEPLMSLKTQNHETPGKENCNSSIEENSGTVKSPEKEKQTPLKSLEEKNVEAEKTLENGVLELSKPLGEEEPRMEDQELMSPEHTLETVSFLGKENQEVVRSSEEQNLESLITFKEESQYPLGGPEAEDQMLERLVEKEDQRFPRSPEEDQQAFRPLEKENQEPLRFEEAEDQVLERLIEKERQESLKSPEEEDQQAFRLLEKENQEPLRFEDAEDQVLERLIEKERQESLKSPEEEDQQAFRLLEKENQEPLRFEEAEDQVLERLVEKESQESLKSPEEEDQRTGKPLEKENQESLRSLDENQETIVLLESKNQRPLRSLEVEEEEQRIVKPLEKVSQVSLESLEKENVQSPRYLEEDDHMIKSLLEDKTHEILGSLEDRNGENFIPPENETQGSLRPPEEEDQRIVNHLEKESQEFLRSPEAEEEEEQVMVRSLEGENHDPLSSVVKEEQMAESKLENESQDSRKSLEDESQETFGSLEKENLESLRSLAGQDQEEQKLEQETQQPLRAVEDEQMTVNPPEKVDPELPKPLRNDQEVVRSLDKENQESLVSLNEGGMETVKSSETENIESLETVGECLGRRKSVDTQEPLWSTEVTSETIEPLEDETQEPLGCVDENQEVLTPLERESQELRSLGKWNPETVESPGGVEDSQQCLEVEEGPEREQHQESLRSLGEVEWELPGSGSQQRWEDVVEDGEGQEASLGATGVETEDKAELHLRGQGGEEKAVEEGELLQDAVGEAWSLGSSEPKEQRVPAEPLDDLEGQPEQTGTLEVPVAQGMPEATEQDEDRAQAGEQDSVEVTLGLEAARAGLELEQEVVGLEDPRHFAREEAIHPSLGEESVKAKIDQGLEEPGKEPKEAGALDSGIPELPKTSSETLECKGWEESGEGWGEEEASLETSDHEGSHAPQPRPPKTEEDEGLQAALTVPGPKLLEPCSPIPILTDAHELQPQAEGIQEAGWQPEAGTEALGRVEDEPEFGRGEIPEGLQDWEEGREDSEADELGETLPDSTPLGLYLKSPASPKWEQAGEQRLFPQGEARKEGWSPAALAAQGLSDPPEEEQQGHDSDLSSEEFEDLGTEASLLPGVPKEVSDHLGQEPPVLQPACWDQGGESDGFADEEESGEEGEEEDADEEEGAESGTQWWGPGPSGGGVKVQDVTQRGDLEHESVGDSGLWDDGLSGAAANVLVTALETVSQDSAEPSGSEGSESASLEGEEGQAIDHLDAPQEVTSVVPGAGDTFDISGQGPNLESEQVNGRMENGLEQAEGQVVLHGDEDQGIPLQEQGTLKAPLVGSPVHLGPSQPLKFTLSGVDGDSWSSGED.

At M1 the chain carries N-acetylmethionine. The head stretch occupies residues 1–7; that stretch reads MEGCVGE. Residues 8-43 are coil 1A; that stretch reads ESFQMWELNRRLEAYLTRVKTLEEQNQLLSAELGGL. The IF rod domain maps to 8-314; it reads ESFQMWELNR…TLLEAENSRL (307 aa). Residues 44–55 form a linker 1 region; that stretch reads RAQSGDASWRAR. The interval 56-151 is coil 1B; sequence ADDELAALRV…ASHEEERAHL (96 aa). The segment at 152 to 174 is linker 12; the sequence is NAQAACTPRRPPAPAHASPIRAP. The segment at 175-193 is coil 2A; it reads EVEELARRLGEVWRGAVRD. A linker 2 region spans residues 194-196; sequence YQE. Residues 197–314 are coil 2B; it reads RVAHMESSLG…TLLEAENSRL (118 aa). Residue S312 is modified to Phosphoserine. The tract at residues 315 to 1864 is tail; it reads QTPGRSSQAS…DGDSWSSGED (1550 aa). At T316 the chain carries Phosphothreonine. Residues S356 and S359 each carry the phosphoserine modification. T389 is modified (phosphothreonine). Disordered regions lie at residues 437–492, 515–625, and 680–845; these read GVLP…EEEG, EIQE…MSPE, and KEDQ…LDEN. Residues 469 to 480 show a composition bias toward basic and acidic residues; that stretch reads SILEAKDRESSE. Polar residues predominate over residues 559-573; that stretch reads KENCNSSIEENSGTV. S565 and S575 each carry phosphoserine. Composition is skewed to basic and acidic residues over residues 575 to 598 and 609 to 618; these read SPEK…EKTL and LGEEEPRMED. Residues S623, S688, S731, S775, S841, S862, and S894 each carry the phosphoserine modification. Composition is skewed to basic and acidic residues over residues 680–690, 698–732, 742–776, and 786–843; these read KEDQRFPRSPE, PLEK…LKSP, LLEK…LKSP, and LLEK…RSLD. Composition is skewed to basic and acidic residues over residues 916-925, 947-965, and 978-1012; these read ILGSLEDRNG, QRIV…RSPE, and LEGE…KSLE. A disordered region spans residues 916–1113; the sequence is ILGSLEDRNG…VKSSETENIE (198 aa). S963, S1010, and S1021 each carry phosphoserine. Positions 1065–1090 are enriched in basic and acidic residues; sequence EKVDPELPKPLRNDQEVVRSLDKENQ. A phosphoserine mark is found at S1106 and S1127. 4 disordered regions span residues 1129–1158, 1175–1344, 1375–1722, and 1735–1807; these read DTQE…LGCV, LRSL…DSVE, EAIH…DDGL, and ETVS…GLEQ. A compositionally biased stretch (polar residues) spans 1133–1143; that stretch reads PLWSTEVTSET. Residues S1177, S1188, and S1195 each carry the phosphoserine modification. The segment covering 1204-1213 has biased composition (basic and acidic residues); sequence GPEREQHQES. At S1216 the chain carries Phosphoserine. A compositionally biased stretch (basic and acidic residues) spans 1254-1273; sequence TEDKAELHLRGQGGEEKAVE. S1290 carries the phosphoserine modification. The segment covering 1384 to 1405 has biased composition (basic and acidic residues); sequence ESVKAKIDQGLEEPGKEPKEAG. Acidic residues predominate over residues 1429 to 1440; it reads ESGEGWGEEEAS. The span at 1514-1527 shows a compositional bias: basic and acidic residues; it reads GRVEDEPEFGRGEI. Residues 1532 to 1547 are compositionally biased toward acidic residues; it reads QDWEEGREDSEADELG. A phosphoserine mark is found at S1541 and S1565. Acidic residues predominate over residues 1612–1621; the sequence is LSSEEFEDLG. 2 positions are modified to phosphoserine: S1656 and S1665. The span at 1658–1680 shows a compositional bias: acidic residues; that stretch reads GFADEEESGEEGEEEDADEEEGA. Residues 1703–1712 show a composition bias toward basic and acidic residues; sequence QRGDLEHESV. 2 stretches are compositionally biased toward low complexity: residues 1713 to 1722 and 1741 to 1755; these read GDSGLWDDGL and SAEP…SASL. S1745 and S1747 each carry phosphoserine. Over residues 1788-1797 the composition is skewed to polar residues; sequence QGPNLESEQV. Phosphoserine is present on residues S1837, S1860, and S1861. Positions 1841-1864 are disordered; sequence LGPSQPLKFTLSGVDGDSWSSGED.

The protein belongs to the intermediate filament family. As to quaternary structure, forms homodimers and homotetramers in vitro. In mixtures with other intermediate filament proteins such as vimentin and alpha-internexin, this protein preferentially forms heterodimers which can assemble to form intermediate filaments if nestin does not exceed 25%. Interacts with FHOD3. Constitutively phosphorylated. This increases during mitosis when the cytoplasmic intermediate filament network is reorganized.

Its function is as follows. Required for brain and eye development. Promotes the disassembly of phosphorylated vimentin intermediate filaments (IF) during mitosis and may play a role in the trafficking and distribution of IF proteins and other cellular factors to daughter cells during progenitor cell division. Required for survival, renewal and mitogen-stimulated proliferation of neural progenitor cells. The polypeptide is Nestin (Nes) (Mus musculus (Mouse)).